The primary structure comprises 492 residues: Serine/threonine protein phosphatase 2A 57 kDa regulatory subunit B' theta isoform (492 aa).

The disordered stretch occupies residues 1–63; sequence MWKQILSKLP…GFKEGNLKGN (63 aa). Residues 16-39 are compositionally biased toward low complexity; sequence KNHSSSSSSTSKSSDNGASKSGNS. Positions 490 to 492 match the Microbody targeting signal motif; it reads SSL.

Belongs to the phosphatase 2A regulatory subunit B56 family. As to quaternary structure, PP2A consists of a common heteromeric enzyme, composed of a catalytic subunit (subunits C), a constant regulatory subunit (subunit A), and a variety of regulatory subunits such as subunits B (the R2/B/PR55/B55, R3/B''/PR72/PR130/PR59 and R5/B'/B56 families). Interacts with BZR1. Interacts with PP2A2, PP2A5 and PP2AA2. Highly expressed in dry seeds. Expressed in roots, cotyledons, rosette leaves and flowers.

The protein resides in the cytoplasm. It is found in the cytosol. The protein localises to the peroxisome. Its function is as follows. The B regulatory subunit may modulate substrate selectivity and catalytic activity, and may also direct the localization of the catalytic enzyme to a particular subcellular compartment. Associates with the serine/threonine-protein phosphatase PP2A catalytic subunit C and regulatory subunit A to positively regulates beta-oxidation of fatty acids and protoauxins in peroxisomes by dephosphorylating peroxisomal beta-oxidation-related proteins. Required for the formation of the PP2A holoenzyme that negatively regulates brassinosteroid signaling by dephosphorylating and inactivating BRI1 in the cytoplasm. The sequence is that of Serine/threonine protein phosphatase 2A 57 kDa regulatory subunit B' theta isoform (B'THETA) from Arabidopsis thaliana (Mouse-ear cress).